The chain runs to 439 residues: MVGWKKKKLCRGHHLWVLGCYMLLAVVSLRLSLRFKCDVDSLDLESRDFQSQHCRDMLYNNLKLPAKRSINCSGITRGDQEAVVQALLDNLEVKKKRPPLTDTYYLNITRDCERFKAQRKFIQFPLSKEELDFPIAYSMVVHEKIENFERLLRAVYAPQNIYCVHVDVKSPETFKEAVKAIISCFPNVFMASKLVPVVYASWSRVQADLNCMEDLLQSSVSWKYLLNTCGTDFPIKTNAEMVLALKMLKGKNSMESEVPSESKKNRWKYHYEVTDTLYPTSKMKDPPPDNLPMFTGNAYFVASRAFVQHVLDNPKSQRLVEWVKDTYSPDEHLWATLQRAPWMPGSVPSHPKYHISDMTAVARLVKWQYHEGDVSMGAPYAPCSGIHRRAICIYGAGDLYWILQNHHLLANKFDPRVDDNVLQCLEEYLRHKAIYGTEL.

Topologically, residues 1 to 11 (MVGWKKKKLCR) are cytoplasmic. A helical; Signal-anchor for type II membrane protein transmembrane segment spans residues 12-29 (GHHLWVLGCYMLLAVVSL). Residues 30-439 (RLSLRFKCDV…RHKAIYGTEL (410 aa)) are Lumenal-facing. N-linked (GlcNAc...) asparagine; by host glycans are attached at residues N71 and N107. 4 disulfides stabilise this stretch: C72–C229, C163–C383, C184–C211, and C392–C424.

It belongs to the glycosyltransferase 14 family.

Its subcellular location is the host Golgi apparatus membrane. It carries out the reaction a 3-O-[beta-D-galactosyl-(1-&gt;3)-N-acetyl-alpha-D-galactosaminyl]-L-seryl-[protein] + UDP-N-acetyl-alpha-D-glucosamine = 3-O-{beta-D-galactosyl-(1-&gt;3)-[N-acetyl-beta-D-glucosaminyl-(1-&gt;6)]-N-acetyl-alpha-D-galactosaminyl}-L-seryl-[protein] + UDP + H(+). The enzyme catalyses a 3-O-[beta-D-galactosyl-(1-&gt;3)-N-acetyl-alpha-D-galactosaminyl]-L-threonyl-[protein] + UDP-N-acetyl-alpha-D-glucosamine = a 3-O-{beta-D-galactosyl-(1-&gt;3)-[N-acetyl-beta-D-glucosaminyl-(1-&gt;6)]-N-acetyl-alpha-D-galactosaminyl}-L-threonyl-[protein] + UDP + H(+). It catalyses the reaction a beta-D-Gal-(1-&gt;4)-beta-D-GlcNAc-(1-&gt;3)-beta-D-Gal-(1-&gt;4)-beta-D-GlcNAc derivative + UDP-N-acetyl-alpha-D-glucosamine = a beta-D-Gal-(1-&gt;4)-beta-D-GlcNAc-(1-&gt;3)-[beta-D-GlcNAc-(1-&gt;6)]-beta-D-Gal-(1-&gt;4)-N-acetyl-beta-D-glucosaminyl derivative + UDP + H(+). The catalysed reaction is 3-O-[N-acetyl-beta-D-glucosaminyl-(1-&gt;3)-N-acetyl-alpha-D-galactosaminyl]-L-seryl-[protein] + UDP-N-acetyl-alpha-D-glucosamine = 3-O-[N-acetyl-beta-D-glucosaminyl-(1-&gt;3)-[N-acetyl-beta-D-glucosaminyl-(1-&gt;6)]-N-acetyl-alpha-D-galactosaminyl]-L-seryl-[protein] + UDP + H(+). It carries out the reaction a 3-O-[N-acetyl-beta-D-glucosaminyl-(1-&gt;3)-N-acetyl-alpha-D-galactosaminyl]-L-threonyl-[protein] + UDP-N-acetyl-alpha-D-glucosamine = 3-O-[N-acetyl-beta-D-glucosaminyl-(1-&gt;3)-[N-acetyl-beta-D-glucosaminyl-(1-&gt;6)]-N-acetyl-alpha-D-galactosaminyl]-L-threonyl-[protein] + UDP + H(+). Its pathway is protein modification; protein glycosylation. In terms of biological role, non-essential glycosyltransferase that can synthesize all known mucin beta 6 N-acetylglucosaminides. Mediates core 2 and core 4 O-glycan branching, 2 important steps in mucin-type biosynthesis. Has also I-branching enzyme activity by converting linear into branched poly-N-acetyllactosaminoglycans. Contributes to the post-translational modifications of structural proteins. This is Beta-1,3-galactosyl-O-glycosyl-glycoprotein beta-1,6-N-acetylglucosaminyltransferase (Bo17) from Bovine herpesvirus 4 (BoHV-4).